The chain runs to 264 residues: Indole-3-glycerol phosphate synthase (264 aa).

It belongs to the TrpC family.

The catalysed reaction is 1-(2-carboxyphenylamino)-1-deoxy-D-ribulose 5-phosphate + H(+) = (1S,2R)-1-C-(indol-3-yl)glycerol 3-phosphate + CO2 + H2O. The protein operates within amino-acid biosynthesis; L-tryptophan biosynthesis; L-tryptophan from chorismate: step 4/5. This is Indole-3-glycerol phosphate synthase from Azoarcus sp. (strain BH72).